The following is a 159-amino-acid chain: Small ribosomal subunit protein uS9 (159 aa).

The protein belongs to the universal ribosomal protein uS9 family.

This chain is Small ribosomal subunit protein uS9, found in Rickettsia peacockii (strain Rustic).